Here is a 465-residue protein sequence, read N- to C-terminus: Gamma-aminobutyric acid receptor subunit rho-2 (465 aa).

An N-terminal signal peptide occupies residues 1-20 (MPYFMRLALFLFCLMALVES). The Extracellular portion of the chain corresponds to 21–260 (RKPRRKRWTG…LYINFTLRRH (240 aa)). Residue Arg-105 coordinates 4-aminobutanoate. A glycan (N-linked (GlcNAc...) asparagine) is linked at Asn-120. Ser-169 contributes to the 4-aminobutanoate binding site. Cys-178 and Cys-192 are disulfide-bonded. Residue Glu-197 coordinates 4-aminobutanoate. N-linked (GlcNAc...) asparagine glycosylation occurs at Asn-254. Residues 261 to 281 (IFFFLLQTYFPATLMVMLSWV) form a helical membrane-spanning segment. At 282–293 (SFWIDHRAVPAR) the chain is on the cytoplasmic side. Residues 294-314 (VSLGIMTVLTMSTIITGVNAS) form a helical membrane-spanning segment. The Extracellular segment spans residues 315 to 325 (MPRVSYIRAVD). A helical membrane pass occupies residues 326–346 (IYLWVSFVFVFLSVLEYAAVN). Residues 347-443 (YLTTVQEQKE…IFQNTHAIDK (97 aa)) lie on the Cytoplasmic side of the membrane. A helical transmembrane segment spans residues 444 to 464 (YSRLIFPAFYIVFNLIYWSVF). A topological domain (extracellular) is located at residue Ser-465.

The protein belongs to the ligand-gated ion channel (TC 1.A.9) family. Gamma-aminobutyric acid receptor (TC 1.A.9.5) subfamily. GABRR2 sub-subfamily. Three rho subunits (rho-1/GBRR1, rho-2/GBRR2 and rho-3/GBRR3) coassemble either to form functional homopentamers or heteropentamers. Rho-2 is unable to form a functional homopentamer. Interacts with SQSTM1. In terms of tissue distribution, expressed in spinal cord and in cerebellum. Expressed in retina.

The protein localises to the postsynaptic cell membrane. Its subcellular location is the cell membrane. The catalysed reaction is chloride(in) = chloride(out). With respect to regulation, in contrast with rho-1 and rho-3 homopentamers, rho-2 GABAARs are not inhibited by picrotoxin. Functionally, rho subunit of the pentameric ligand-gated chloride channels responsible for mediating the effects of gamma-aminobutyric acid (GABA), the major inhibitory neurotransmitter in the brain. Rho-containing GABA-gated chloride channels are a subclass of GABA(A) receptors (GABAARs) entirely composed of rho subunits, where GABA molecules bind at the rho intersubunit interfaces. When activated by GABA, rho-GABAARs selectively allow the flow of chloride anions across the cell membrane down their electrochemical gradient. Rho-2 GABAARs may contribute to the regulation of glial development in the cerebellum by controlling extrasynaptic transmission. Rho-2 GABAARs are also involved in neuronal tonic (extrasynaptic) and phasic (synaptic) transmission in the Purkinje neurons of the cerebellum. Rho-2 GABAARs expressed in retina may play a role in retinal neurotransmission. The polypeptide is Gamma-aminobutyric acid receptor subunit rho-2 (Rattus norvegicus (Rat)).